A 188-amino-acid polypeptide reads, in one-letter code: Transmembrane protein 160 (188 aa).

The transit peptide at 1-96 directs the protein to the mitochondrion; that stretch reads MGGGWWWARA…ISFMQSDMGR (96 aa). Residues 25–52 form a disordered region; the sequence is PPRPRSGGARGSFAPGHGPRAGASPPPV. Residues 29–38 show a composition bias toward low complexity; it reads RSGGARGSFA. Residue Ser48 is modified to Phosphoserine. The next 2 helical transmembrane spans lie at 102–122 and 135–155; these read FFLLGGLCVVWGGASYVVGLA and AAAGVGAVLAAGLLWACAVGL.

It belongs to the TMEM160 family.

Its subcellular location is the mitochondrion inner membrane. This is Transmembrane protein 160 from Bos taurus (Bovine).